The sequence spans 453 residues: Indoleamine 2,3-dioxygenase (453 aa).

H331 contributes to the heme binding site.

It belongs to the indoleamine 2,3-dioxygenase family. Heme serves as cofactor.

The catalysed reaction is D-tryptophan + O2 = N-formyl-D-kynurenine. The enzyme catalyses L-tryptophan + O2 = N-formyl-L-kynurenine. It functions in the pathway cofactor biosynthesis; NAD(+) biosynthesis. In terms of biological role, catalyzes the first step in tryptophan catabolism in order to supply de novo nicotinamide adenine dinucleotide (NAD(+)) via the kynurenine pathway. Plays a role in the cellular response to telomere uncapping. The sequence is that of Indoleamine 2,3-dioxygenase (BNA2) from Saccharomyces cerevisiae (strain ATCC 204508 / S288c) (Baker's yeast).